Reading from the N-terminus, the 168-residue chain is Transcriptional regulator MraZ (168 aa).

SpoVT-AbrB domains follow at residues 8-51 (EYNQ…GGDR) and 90-140 (ALNM…KADI).

The protein belongs to the MraZ family. As to quaternary structure, forms oligomers.

It is found in the cytoplasm. The protein resides in the nucleoid. This is Transcriptional regulator MraZ from Cereibacter sphaeroides (strain KD131 / KCTC 12085) (Rhodobacter sphaeroides).